The following is a 366-amino-acid chain: Probable cyclin-dependent kinase 10 (366 aa).

The 287-residue stretch at 7-293 folds into the Protein kinase domain; it reads FEKLDSIGEG…ASDAIKHPFF (287 aa). Residues 13–21 and K36 each bind ATP; that span reads IGEGTYGIV. The active-site Proton acceptor is D132. A compositionally biased stretch (low complexity) spans 315-358; sequence FKNQNKKQNNNFNNFVQNNQTNQNNQTNQNNQTNQNNKTSQNNN. Positions 315-366 are disordered; sequence FKNQNKKQNNNFNNFVQNNQTNQNNQTNQNNQTNQNNKTSQNNNMDSYKYSK.

The protein belongs to the protein kinase superfamily. CMGC Ser/Thr protein kinase family. CDC2/CDKX subfamily.

It carries out the reaction L-seryl-[protein] + ATP = O-phospho-L-seryl-[protein] + ADP + H(+). The catalysed reaction is L-threonyl-[protein] + ATP = O-phospho-L-threonyl-[protein] + ADP + H(+). The polypeptide is Probable cyclin-dependent kinase 10 (cdk10) (Dictyostelium discoideum (Social amoeba)).